The chain runs to 277 residues: 4-deoxy-L-threo-5-hexosulose-uronate ketol-isomerase (277 aa).

Zn(2+) is bound by residues H195, H197, E202, and H244.

The protein belongs to the KduI family. Zn(2+) serves as cofactor.

The enzyme catalyses 5-dehydro-4-deoxy-D-glucuronate = 3-deoxy-D-glycero-2,5-hexodiulosonate. It functions in the pathway glycan metabolism; pectin degradation; 2-dehydro-3-deoxy-D-gluconate from pectin: step 4/5. Catalyzes the isomerization of 5-dehydro-4-deoxy-D-glucuronate to 3-deoxy-D-glycero-2,5-hexodiulosonate. The protein is 4-deoxy-L-threo-5-hexosulose-uronate ketol-isomerase of Oceanobacillus iheyensis (strain DSM 14371 / CIP 107618 / JCM 11309 / KCTC 3954 / HTE831).